The following is a 589-amino-acid chain: Aspartate--tRNA ligase 2 (589 aa).

Glu-174 serves as a coordination point for L-aspartate. The aspartate stretch occupies residues 198–201 (QITK). L-aspartate is bound at residue Arg-220. Residues 220–222 (RDE) and Gln-229 contribute to the ATP site. His-443 contributes to the L-aspartate binding site. Position 477 (Glu-477) interacts with ATP. L-aspartate is bound at residue Arg-484. 529 to 532 (GLDR) contributes to the ATP binding site.

The protein belongs to the class-II aminoacyl-tRNA synthetase family. Type 1 subfamily. In terms of assembly, homodimer.

It is found in the cytoplasm. The catalysed reaction is tRNA(Asp) + L-aspartate + ATP = L-aspartyl-tRNA(Asp) + AMP + diphosphate. Catalyzes the attachment of L-aspartate to tRNA(Asp) in a two-step reaction: L-aspartate is first activated by ATP to form Asp-AMP and then transferred to the acceptor end of tRNA(Asp). This chain is Aspartate--tRNA ligase 2, found in Streptococcus mutans serotype c (strain ATCC 700610 / UA159).